We begin with the raw amino-acid sequence, 542 residues long: Adenosylmethionine-8-amino-7-oxononanoate aminotransferase (542 aa).

Residue 170 to 171 (GS) participates in pyridoxal 5'-phosphate binding. A substrate-binding site is contributed by Y205. D311 provides a ligand contact to pyridoxal 5'-phosphate. K340, G375, and R470 together coordinate substrate. K340 carries the post-translational modification N6-(pyridoxal phosphate)lysine. The interval 509–542 (DGGLWTKRPDGPDNPDKANTPDTPDGARTGETVV) is disordered. Positions 515–524 (KRPDGPDNPD) are enriched in basic and acidic residues.

It belongs to the class-III pyridoxal-phosphate-dependent aminotransferase family. BioA subfamily. Homodimer. Requires pyridoxal 5'-phosphate as cofactor.

It is found in the cytoplasm. The catalysed reaction is (8S)-8-amino-7-oxononanoate + S-adenosyl-L-methionine = S-adenosyl-4-methylsulfanyl-2-oxobutanoate + (7R,8S)-7,8-diammoniononanoate. It participates in cofactor biosynthesis; biotin biosynthesis; 7,8-diaminononanoate from 8-amino-7-oxononanoate (SAM route): step 1/1. Its function is as follows. Catalyzes the transfer of the alpha-amino group from S-adenosyl-L-methionine (SAM) to 7-keto-8-aminopelargonic acid (KAPA) to form 7,8-diaminopelargonic acid (DAPA). It is the only aminotransferase known to utilize SAM as an amino donor. In Nitratidesulfovibrio vulgaris (strain ATCC 29579 / DSM 644 / CCUG 34227 / NCIMB 8303 / VKM B-1760 / Hildenborough) (Desulfovibrio vulgaris), this protein is Adenosylmethionine-8-amino-7-oxononanoate aminotransferase.